Reading from the N-terminus, the 434-residue chain is Serine hydroxymethyltransferase (434 aa).

Residues Leu132 and 136-138 contribute to the (6S)-5,6,7,8-tetrahydrofolate site; that span reads GHL. Residue Lys241 is modified to N6-(pyridoxal phosphate)lysine.

It belongs to the SHMT family. As to quaternary structure, homodimer. Pyridoxal 5'-phosphate serves as cofactor.

Its subcellular location is the cytoplasm. The enzyme catalyses (6R)-5,10-methylene-5,6,7,8-tetrahydrofolate + glycine + H2O = (6S)-5,6,7,8-tetrahydrofolate + L-serine. It participates in one-carbon metabolism; tetrahydrofolate interconversion. It functions in the pathway amino-acid biosynthesis; glycine biosynthesis; glycine from L-serine: step 1/1. Its function is as follows. Catalyzes the reversible interconversion of serine and glycine with tetrahydrofolate (THF) serving as the one-carbon carrier. This reaction serves as the major source of one-carbon groups required for the biosynthesis of purines, thymidylate, methionine, and other important biomolecules. Also exhibits THF-independent aldolase activity toward beta-hydroxyamino acids, producing glycine and aldehydes, via a retro-aldol mechanism. This is Serine hydroxymethyltransferase from Nitrobacter hamburgensis (strain DSM 10229 / NCIMB 13809 / X14).